We begin with the raw amino-acid sequence, 375 residues long: Growth/differentiation factor 8 (375 aa).

The signal sequence occupies residues 1–23 (MQKLAVYVYIYLFMLISVDPVAL). The propeptide occupies 24-266 (DDGSQPTENA…VTDTPKRSRR (243 aa)). N-linked (GlcNAc...) asparagine glycosylation is present at N71. Intrachain disulfides connect C272-C282, C281-C340, C309-C372, and C313-C374.

Belongs to the TGF-beta family. Homodimer; disulfide-linked.

It localises to the secreted. Acts specifically as a negative regulator of skeletal muscle growth. This chain is Growth/differentiation factor 8 (MSTN), found in Anser anser anser (Western greylag goose).